A 695-amino-acid chain; its full sequence is Sodium-dependent phosphate transport protein 2B (695 aa).

A disordered region spans residues 1–44 (MAPWPELENAHPNPNKFIEGASGPQSSIPDKDKGTSKTNDSGTP). The Cytoplasmic portion of the chain corresponds to 1 to 90 (MAPWPELENA…KWSERDSKGK (90 aa)). Residues 91–111 (ILCIFQGIGKFILLLGFLYLF) form a helical membrane-spanning segment. The Extracellular segment spans residues 112-136 (VCSLDVLSSAFQLVGGKMAGQFFSN). Residues 137–157 (NSIMSNPVAGLVIGVLVTVMV) form a helical membrane-spanning segment. The Cytoplasmic segment spans residues 158–213 (QSSSTSSSIIVSMVASSLLSVRAAIPIIMGANIGTSITNTIVALMQAGDRNEFRRA). The helical transmembrane segment at 214-234 (FAGATVHDFFNWLSVLVLLPL) threads the bilayer. Topologically, residues 235–363 (EAATHYLEKL…FVNFSLPDLA (129 aa)) are extracellular. N-linked (GlcNAc...) asparagine glycosylation is found at asparagine 295, asparagine 313, asparagine 321, asparagine 340, and asparagine 356. A disulfide bond links cysteine 303 and cysteine 350. A helical transmembrane segment spans residues 364 to 384 (VGIILLTVSLLILCGCLIMIV). The Cytoplasmic segment spans residues 385-408 (KLLGSVLRGQVATVIKKTLNTDFP). Residues 409–429 (FPFAWLTGYLAILVGAGMTFI) traverse the membrane as a helical segment. The Extracellular segment spans residues 430-486 (VQSSSVFTSAMTPLIGIGVISIERAYPLTLGSNIGTTTTAILAALASPGNTLRSSLQ). Residues 487–507 (IALCHFFFNISGILLWYPIPF) traverse the membrane as a helical segment. The Cytoplasmic portion of the chain corresponds to 508–526 (TRLPIRLAKGLGNISAKYR). The chain crosses the membrane as a helical span at residues 527-547 (WFAVFYLIFFFLLTPLTVFGL). Residues 548–551 (SLAG) are Extracellular-facing. The helical transmembrane segment at 552 to 572 (WPVLVGVGVPIILLILLVLCL) threads the bilayer. The Cytoplasmic segment spans residues 573 to 695 (RMLQARCPRI…MKALSNTTVF (123 aa)).

The protein belongs to the SLC34A transporter family. In terms of tissue distribution, highly expressed in the lung, in type II alveolar cells. Moderately expressed in kidney followed by small intestine.

Its subcellular location is the apical cell membrane. The catalysed reaction is 3 Na(+)(out) + phosphate(out) = 3 Na(+)(in) + phosphate(in). Involved in actively transporting phosphate into cells via Na(+) cotransport. This chain is Sodium-dependent phosphate transport protein 2B (Slc34a2), found in Rattus norvegicus (Rat).